Here is a 375-residue protein sequence, read N- to C-terminus: Succinyl-diaminopimelate desuccinylase (375 aa).

Residue His-66 coordinates Zn(2+). The active site involves Asp-68. Asp-99 contributes to the Zn(2+) binding site. Glu-133 serves as the catalytic Proton acceptor. Residues Glu-134, Glu-162, and His-348 each contribute to the Zn(2+) site.

Belongs to the peptidase M20A family. DapE subfamily. As to quaternary structure, homodimer. It depends on Zn(2+) as a cofactor. Co(2+) serves as cofactor.

The catalysed reaction is N-succinyl-(2S,6S)-2,6-diaminopimelate + H2O = (2S,6S)-2,6-diaminopimelate + succinate. It functions in the pathway amino-acid biosynthesis; L-lysine biosynthesis via DAP pathway; LL-2,6-diaminopimelate from (S)-tetrahydrodipicolinate (succinylase route): step 3/3. Functionally, catalyzes the hydrolysis of N-succinyl-L,L-diaminopimelic acid (SDAP), forming succinate and LL-2,6-diaminopimelate (DAP), an intermediate involved in the bacterial biosynthesis of lysine and meso-diaminopimelic acid, an essential component of bacterial cell walls. The sequence is that of Succinyl-diaminopimelate desuccinylase from Herminiimonas arsenicoxydans.